Here is a 260-residue protein sequence, read N- to C-terminus: Ras-related protein Rab-26 (260 aa).

A disordered region spans residues 1–56; that stretch reads MSRKKTPKSKGGSEPATSTLPAAAAATNGPRLAHPRTVRPGPEAPPNGPPQSIRPS. GTP-binding residues include Ser76, Gly77, Val78, Gly79, Lys80, Thr81, Cys82, Ser99, and Thr100. A Mg(2+)-binding site is contributed by Thr81. 2 consecutive short sequence motifs (switch) follow at residues 90 to 105 and 123 to 140; these read GAFL…GIDF and DTAG…YYRD. Residues Thr100 and Asp123 each coordinate Mg(2+). GTP contacts are provided by Gly126, Asn181, Lys182, Asp184, Ala212, and Arg213. Residues Cys257 and Cys258 are each lipidated (S-geranylgeranyl cysteine).

It belongs to the small GTPase superfamily. Rab family. As to quaternary structure, interacts with ADRA2B. Interacts with RIMS1. Mg(2+) serves as cofactor. As to expression, detected in zymogenic cells in the stomach.

The protein resides in the cytoplasmic vesicle. The protein localises to the secretory vesicle membrane. It localises to the golgi apparatus membrane. The enzyme catalyses GTP + H2O = GDP + phosphate + H(+). With respect to regulation, regulated by guanine nucleotide exchange factors (GEFs) which promote the exchange of bound GDP for free GTP. Regulated by GTPase activating proteins (GAPs) which increase the GTP hydrolysis activity. Inhibited by GDP dissociation inhibitors (GDIs). The small GTPases Rab are key regulators of intracellular membrane trafficking, from the formation of transport vesicles to their fusion with membranes. Rabs cycle between an inactive GDP-bound form and an active GTP-bound form that is able to recruit to membranes different set of downstream effectors directly responsible for vesicle formation, movement, tethering and fusion. RAB26 mediates transport of ADRA2A and ADRA2B from the Golgi to the cell membrane. Plays a role in the maturation of zymogenic granules and in pepsinogen secretion in the stomach. Plays a role in the secretion of amylase from acinar granules in the parotid gland. The chain is Ras-related protein Rab-26 from Mus musculus (Mouse).